A 557-amino-acid chain; its full sequence is Formate--tetrahydrofolate ligase 2 (557 aa).

Residue 66-73 (TPAGEGKT) coordinates ATP.

It belongs to the formate--tetrahydrofolate ligase family.

The enzyme catalyses (6S)-5,6,7,8-tetrahydrofolate + formate + ATP = (6R)-10-formyltetrahydrofolate + ADP + phosphate. It participates in one-carbon metabolism; tetrahydrofolate interconversion. The polypeptide is Formate--tetrahydrofolate ligase 2 (Streptococcus pyogenes serotype M28 (strain MGAS6180)).